The sequence spans 156 residues: Small ribosomal subunit protein uS7 (156 aa).

It belongs to the universal ribosomal protein uS7 family. Part of the 30S ribosomal subunit. Contacts proteins S9 and S11.

Functionally, one of the primary rRNA binding proteins, it binds directly to 16S rRNA where it nucleates assembly of the head domain of the 30S subunit. Is located at the subunit interface close to the decoding center, probably blocks exit of the E-site tRNA. This is Small ribosomal subunit protein uS7 from Klebsiella pneumoniae (strain 342).